A 517-amino-acid chain; its full sequence is L-amino-acid oxidase (517 aa).

The first 18 residues, 1-18, serve as a signal peptide directing secretion; it reads MNVFFMFSLLFLAALESC. Cysteines 29 and 192 form a disulfide. Residues 62–63, 82–83, R90, and 106–109 contribute to the FAD site; these read MA, EA, and GPMR. Residue R109 coordinates substrate. A glycan (N-linked (GlcNAc...) asparagine) is linked at N191. V280 provides a ligand contact to FAD. C350 and C431 are disulfide-bonded. A glycan (N-linked (GlcNAc...) asparagine) is linked at N380. Y391 contributes to the substrate binding site. FAD-binding positions include E476 and 483–488; that span reads GWLDST. Residue 483 to 484 coordinates substrate; it reads GW.

The protein belongs to the flavin monoamine oxidase family. FIG1 subfamily. In terms of assembly, homodimer; non-covalently linked. It depends on FAD as a cofactor. In terms of processing, N-glycosylated. Expressed by the venom gland.

It is found in the secreted. The enzyme catalyses an L-alpha-amino acid + O2 + H2O = a 2-oxocarboxylate + H2O2 + NH4(+). In terms of biological role, catalyzes an oxidative deamination of predominantly hydrophobic and aromatic L-amino acids, thus producing hydrogen peroxide that may contribute to the diverse toxic effects of this enzyme. Exhibits diverse biological activities, such as hemorrhage, hemolysis, edema, apoptosis of vascular endothelial cells or tumor cell lines, antibacterial and antiparasitic activities, as well as regulation of platelet aggregation. Effects of snake L-amino oxidases on platelets are controversial, since they either induce aggregation or inhibit agonist-induced aggregation. These different effects are probably due to different experimental conditions. This is L-amino-acid oxidase from Notechis scutatus scutatus (Mainland tiger snake).